Here is a 137-residue protein sequence, read N- to C-terminus: Golgin subfamily A member 7 (137 aa).

Residues Cys-69 and Cys-72 are each lipidated (S-palmitoyl cysteine).

The protein belongs to the ERF4 family. In terms of assembly, interacts with GOLGA3. Interacts with ZDHHC9. In terms of processing, palmitoylated on Cys-69 and Cys-72; which is required for Golgi localization and interaction with GOLGA3.

The protein resides in the golgi apparatus membrane. Functionally, may be involved in protein transport from Golgi to cell surface. The ZDHHC9-GOLGA7 complex is a palmitoyltransferase specific for HRAS and NRAS. The protein is Golgin subfamily A member 7 (GOLGA7) of Bos taurus (Bovine).